Consider the following 150-residue polypeptide: Large ribosomal subunit protein bL9 (150 aa).

It belongs to the bacterial ribosomal protein bL9 family.

Binds to the 23S rRNA. This Staphylococcus aureus (strain NCTC 8325 / PS 47) protein is Large ribosomal subunit protein bL9.